Reading from the N-terminus, the 297-residue chain is Phosphoribosylaminoimidazole-succinocarboxamide synthase (297 aa).

Belongs to the SAICAR synthetase family.

The catalysed reaction is 5-amino-1-(5-phospho-D-ribosyl)imidazole-4-carboxylate + L-aspartate + ATP = (2S)-2-[5-amino-1-(5-phospho-beta-D-ribosyl)imidazole-4-carboxamido]succinate + ADP + phosphate + 2 H(+). The protein operates within purine metabolism; IMP biosynthesis via de novo pathway; 5-amino-1-(5-phospho-D-ribosyl)imidazole-4-carboxamide from 5-amino-1-(5-phospho-D-ribosyl)imidazole-4-carboxylate: step 1/2. This is Phosphoribosylaminoimidazole-succinocarboxamide synthase from Mycobacterium marinum (strain ATCC BAA-535 / M).